A 173-amino-acid chain; its full sequence is Adenine phosphoribosyltransferase (173 aa).

Belongs to the purine/pyrimidine phosphoribosyltransferase family. As to quaternary structure, homodimer.

The protein resides in the cytoplasm. It catalyses the reaction AMP + diphosphate = 5-phospho-alpha-D-ribose 1-diphosphate + adenine. Its pathway is purine metabolism; AMP biosynthesis via salvage pathway; AMP from adenine: step 1/1. Catalyzes a salvage reaction resulting in the formation of AMP, that is energically less costly than de novo synthesis. The polypeptide is Adenine phosphoribosyltransferase (Listeria monocytogenes serotype 4b (strain CLIP80459)).